The following is a 469-amino-acid chain: Actin-related protein 4 (469 aa).

The tract at residues 104–136 (PERSTPPSKKGINISDDGDVPMEDDGNNNEDAT) is disordered. Acidic residues predominate over residues 119 to 136 (DDGDVPMEDDGNNNEDAT).

Belongs to the actin family. ARP4 subfamily. In terms of assembly, component of the NuA4 histone acetyltransferase complex, of the INO80 chromatin remodeling complex, and of the SWR1 chromatin remodeling complex.

The protein localises to the nucleus. Chromatin interaction component of the NuA4 histone acetyltransferase complex which is involved in transcriptional activation of selected genes principally by acetylation of nucleosomal histone H4 and H2A. The NuA4 complex is also involved in DNA repair. Is required for NuA4 complex integrity. Component of the SWR1 complex which mediates the ATP-dependent exchange of histone H2A for the H2A variant H2A.Z leading to transcriptional regulation of selected genes by chromatin remodeling. Component of the INO80 complex which remodels chromatin by shifting nucleosomes and is involved in DNA repair. This is Actin-related protein 4 (arp-4) from Neurospora crassa (strain ATCC 24698 / 74-OR23-1A / CBS 708.71 / DSM 1257 / FGSC 987).